The following is a 146-amino-acid chain: UPF0756 membrane protein PTH_1817 (146 aa).

4 helical membrane-spanning segments follow: residues 6-26 (LLIG…ILLI), 46-66 (MGLT…KASW), 69-89 (IISS…ALAT), and 105-125 (IVFG…GIPV).

The protein belongs to the UPF0756 family.

The protein localises to the cell membrane. The protein is UPF0756 membrane protein PTH_1817 of Pelotomaculum thermopropionicum (strain DSM 13744 / JCM 10971 / SI).